Here is a 347-residue protein sequence, read N- to C-terminus: Holliday junction branch migration complex subunit RuvB (347 aa).

Positions 1–182 (MSAQNPVLTP…FGIPVRLSFY (182 aa)) are large ATPase domain (RuvB-L). Residues Leu21, Arg22, Gly63, Lys66, Thr67, Thr68, 129-131 (EDF), Arg172, Tyr182, and Arg219 contribute to the ATP site. Thr67 is a Mg(2+) binding site. A small ATPAse domain (RuvB-S) region spans residues 183–253 (TVEELELIVR…IADEALTRLL (71 aa)). The tract at residues 256-347 (NMGLDQLDTR…QFRLTLEDDD (92 aa)) is head domain (RuvB-H). The DNA site is built by Arg292, Arg311, and Arg316.

Belongs to the RuvB family. As to quaternary structure, homohexamer. Forms an RuvA(8)-RuvB(12)-Holliday junction (HJ) complex. HJ DNA is sandwiched between 2 RuvA tetramers; dsDNA enters through RuvA and exits via RuvB. An RuvB hexamer assembles on each DNA strand where it exits the tetramer. Each RuvB hexamer is contacted by two RuvA subunits (via domain III) on 2 adjacent RuvB subunits; this complex drives branch migration. In the full resolvosome a probable DNA-RuvA(4)-RuvB(12)-RuvC(2) complex forms which resolves the HJ.

The protein localises to the cytoplasm. The catalysed reaction is ATP + H2O = ADP + phosphate + H(+). The RuvA-RuvB-RuvC complex processes Holliday junction (HJ) DNA during genetic recombination and DNA repair, while the RuvA-RuvB complex plays an important role in the rescue of blocked DNA replication forks via replication fork reversal (RFR). RuvA specifically binds to HJ cruciform DNA, conferring on it an open structure. The RuvB hexamer acts as an ATP-dependent pump, pulling dsDNA into and through the RuvAB complex. RuvB forms 2 homohexamers on either side of HJ DNA bound by 1 or 2 RuvA tetramers; 4 subunits per hexamer contact DNA at a time. Coordinated motions by a converter formed by DNA-disengaged RuvB subunits stimulates ATP hydrolysis and nucleotide exchange. Immobilization of the converter enables RuvB to convert the ATP-contained energy into a lever motion, pulling 2 nucleotides of DNA out of the RuvA tetramer per ATP hydrolyzed, thus driving DNA branch migration. The RuvB motors rotate together with the DNA substrate, which together with the progressing nucleotide cycle form the mechanistic basis for DNA recombination by continuous HJ branch migration. Branch migration allows RuvC to scan DNA until it finds its consensus sequence, where it cleaves and resolves cruciform DNA. The polypeptide is Holliday junction branch migration complex subunit RuvB (Allorhizobium ampelinum (strain ATCC BAA-846 / DSM 112012 / S4) (Agrobacterium vitis (strain S4))).